Consider the following 146-residue polypeptide: Putative calcium-binding protein CML19 (146 aa).

EF-hand domains lie at 3–38 (AATAEFRRVFSAFDRDADGKISAAELRLCMKAALGE), 40–75 (MSAEEAEALVSSADTDDDGLLDEEEFTKLAVQLEMG), 79–114 (ERCRGLMEAFRMYEMEGEGRITPASLKRMLSKLGSH), and 115–146 (QGIEECQTMICRFDLDGDGVISFEEFKIMMDA). Ca(2+) contacts are provided by Asp16, Asp18, Asp20, Lys22, Glu27, Asp53, Asp55, Asp57, and Glu64. Asp128, Asp130, Asp132, and Glu139 together coordinate Ca(2+).

In terms of biological role, potential calcium sensor. The chain is Putative calcium-binding protein CML19 (CML19) from Oryza sativa subsp. japonica (Rice).